The following is a 339-amino-acid chain: Glycerol-3-phosphate dehydrogenase [NAD(P)+] (339 aa).

Ser15, Tyr16, His36, and Lys110 together coordinate NADPH. Lys110, Gly139, and Thr141 together coordinate sn-glycerol 3-phosphate. Ala143 lines the NADPH pocket. Positions 195, 248, 258, 259, and 260 each coordinate sn-glycerol 3-phosphate. Residue Lys195 is the Proton acceptor of the active site. Arg259 lines the NADPH pocket. 2 residues coordinate NADPH: Val283 and Glu285.

Belongs to the NAD-dependent glycerol-3-phosphate dehydrogenase family.

It is found in the cytoplasm. It carries out the reaction sn-glycerol 3-phosphate + NAD(+) = dihydroxyacetone phosphate + NADH + H(+). The catalysed reaction is sn-glycerol 3-phosphate + NADP(+) = dihydroxyacetone phosphate + NADPH + H(+). It functions in the pathway membrane lipid metabolism; glycerophospholipid metabolism. In terms of biological role, catalyzes the reduction of the glycolytic intermediate dihydroxyacetone phosphate (DHAP) to sn-glycerol 3-phosphate (G3P), the key precursor for phospholipid synthesis. In Serratia proteamaculans (strain 568), this protein is Glycerol-3-phosphate dehydrogenase [NAD(P)+].